The following is a 473-amino-acid chain: 3-isopropylmalate dehydratase large subunit (473 aa).

Positions 348, 413, and 416 each coordinate [4Fe-4S] cluster.

It belongs to the aconitase/IPM isomerase family. LeuC type 1 subfamily. In terms of assembly, heterodimer of LeuC and LeuD. [4Fe-4S] cluster serves as cofactor.

It catalyses the reaction (2R,3S)-3-isopropylmalate = (2S)-2-isopropylmalate. It participates in amino-acid biosynthesis; L-leucine biosynthesis; L-leucine from 3-methyl-2-oxobutanoate: step 2/4. Functionally, catalyzes the isomerization between 2-isopropylmalate and 3-isopropylmalate, via the formation of 2-isopropylmaleate. The chain is 3-isopropylmalate dehydratase large subunit from Parvibaculum lavamentivorans (strain DS-1 / DSM 13023 / NCIMB 13966).